The chain runs to 483 residues: Cytochrome P450 71A23 (483 aa).

Residues 1–21 (MILFLCLIILFIITILFFKKH) form a helical membrane-spanning segment. Position 429 (cysteine 429) interacts with heme.

It belongs to the cytochrome P450 family. The cofactor is heme.

Its subcellular location is the membrane. The sequence is that of Cytochrome P450 71A23 (CYP71A23) from Arabidopsis thaliana (Mouse-ear cress).